Reading from the N-terminus, the 298-residue chain is uncharacterized protein (298 aa).

This sequence belongs to the glycosyltransferase 2 family.

This is an uncharacterized protein from Mycoplasma genitalium (strain ATCC 33530 / DSM 19775 / NCTC 10195 / G37) (Mycoplasmoides genitalium).